A 268-amino-acid chain; its full sequence is Tryptophan synthase alpha chain (268 aa).

Active-site proton acceptor residues include glutamate 49 and aspartate 60.

It belongs to the TrpA family. Tetramer of two alpha and two beta chains.

The catalysed reaction is (1S,2R)-1-C-(indol-3-yl)glycerol 3-phosphate + L-serine = D-glyceraldehyde 3-phosphate + L-tryptophan + H2O. The protein operates within amino-acid biosynthesis; L-tryptophan biosynthesis; L-tryptophan from chorismate: step 5/5. The alpha subunit is responsible for the aldol cleavage of indoleglycerol phosphate to indole and glyceraldehyde 3-phosphate. In Yersinia enterocolitica serotype O:8 / biotype 1B (strain NCTC 13174 / 8081), this protein is Tryptophan synthase alpha chain.